A 325-amino-acid chain; its full sequence is ATP phosphoribosyltransferase (325 aa).

It belongs to the ATP phosphoribosyltransferase family. Long subfamily. Mg(2+) is required as a cofactor.

It localises to the cytoplasm. It catalyses the reaction 1-(5-phospho-beta-D-ribosyl)-ATP + diphosphate = 5-phospho-alpha-D-ribose 1-diphosphate + ATP. It functions in the pathway amino-acid biosynthesis; L-histidine biosynthesis; L-histidine from 5-phospho-alpha-D-ribose 1-diphosphate: step 1/9. Feedback inhibited by histidine. Functionally, catalyzes the condensation of ATP and 5-phosphoribose 1-diphosphate to form N'-(5'-phosphoribosyl)-ATP (PR-ATP). Has a crucial role in the pathway because the rate of histidine biosynthesis seems to be controlled primarily by regulation of HisG enzymatic activity. This chain is ATP phosphoribosyltransferase, found in Nitrobacter hamburgensis (strain DSM 10229 / NCIMB 13809 / X14).